Here is a 261-residue protein sequence, read N- to C-terminus: Methionine aminopeptidase (261 aa).

Histidine 78 is a binding site for substrate. Residues aspartate 96, aspartate 107, and histidine 170 each coordinate a divalent metal cation. A substrate-binding site is contributed by histidine 177. 2 residues coordinate a divalent metal cation: glutamate 202 and glutamate 233.

It belongs to the peptidase M24A family. Methionine aminopeptidase type 1 subfamily. Monomer. Requires Co(2+) as cofactor. The cofactor is Zn(2+). Mn(2+) serves as cofactor. Fe(2+) is required as a cofactor.

The enzyme catalyses Release of N-terminal amino acids, preferentially methionine, from peptides and arylamides.. Removes the N-terminal methionine from nascent proteins. The N-terminal methionine is often cleaved when the second residue in the primary sequence is small and uncharged (Met-Ala-, Cys, Gly, Pro, Ser, Thr, or Val). Requires deformylation of the N(alpha)-formylated initiator methionine before it can be hydrolyzed. This Buchnera aphidicola subsp. Schizaphis graminum (strain Sg) protein is Methionine aminopeptidase.